Consider the following 153-residue polypeptide: MAINIVAQNKKARHDYEILEKFEAGIVLSGAEVKALRAKRANLSDAFCRFIKGELYLMNAHIAHLETANKYFTPDTRAPRKLLLHKKELEKLYVKVHKDGLTIVPLMIYFNERNYAKVSIAIAKGKKLHDKRADMKAKTLDREAKTAMKNRSY.

Belongs to the SmpB family.

It localises to the cytoplasm. Functionally, required for rescue of stalled ribosomes mediated by trans-translation. Binds to transfer-messenger RNA (tmRNA), required for stable association of tmRNA with ribosomes. tmRNA and SmpB together mimic tRNA shape, replacing the anticodon stem-loop with SmpB. tmRNA is encoded by the ssrA gene; the 2 termini fold to resemble tRNA(Ala) and it encodes a 'tag peptide', a short internal open reading frame. During trans-translation Ala-aminoacylated tmRNA acts like a tRNA, entering the A-site of stalled ribosomes, displacing the stalled mRNA. The ribosome then switches to translate the ORF on the tmRNA; the nascent peptide is terminated with the 'tag peptide' encoded by the tmRNA and targeted for degradation. The ribosome is freed to recommence translation, which seems to be the essential function of trans-translation. The polypeptide is SsrA-binding protein (Sulfurovum sp. (strain NBC37-1)).